A 504-amino-acid polypeptide reads, in one-letter code: 2,3-bisphosphoglycerate-independent phosphoglycerate mutase (504 aa).

Positions 9 and 59 each coordinate Mn(2+). The Phosphoserine intermediate role is filled by S59. Substrate-binding positions include H120, 149 to 150 (RD), R181, R187, 253 to 256 (RPDR), and K326. D393, H397, D434, H435, and H451 together coordinate Mn(2+).

The protein belongs to the BPG-independent phosphoglycerate mutase family. Mn(2+) serves as cofactor.

It catalyses the reaction (2R)-2-phosphoglycerate = (2R)-3-phosphoglycerate. It participates in carbohydrate degradation; glycolysis; pyruvate from D-glyceraldehyde 3-phosphate: step 3/5. Its function is as follows. Catalyzes the interconversion of 2-phosphoglycerate and 3-phosphoglycerate. The protein is 2,3-bisphosphoglycerate-independent phosphoglycerate mutase of Haloquadratum walsbyi (strain DSM 16790 / HBSQ001).